A 61-amino-acid polypeptide reads, in one-letter code: MLNIFNLVCICIHSVLYSSSFFSAKLPEAYAFLNPIVDIMPVIPLLFFLLAFVWQAAVSFR.

The propeptide occupies methionine 1 to alanine 24. Residues isoleucine 36 to alanine 56 traverse the membrane as a helical segment.

The protein belongs to the PsbK family. In terms of assembly, PSII is composed of 1 copy each of membrane proteins PsbA, PsbB, PsbC, PsbD, PsbE, PsbF, PsbH, PsbI, PsbJ, PsbK, PsbL, PsbM, PsbT, PsbX, PsbY, PsbZ, Psb30/Ycf12, at least 3 peripheral proteins of the oxygen-evolving complex and a large number of cofactors. It forms dimeric complexes.

The protein localises to the plastid. The protein resides in the chloroplast thylakoid membrane. In terms of biological role, one of the components of the core complex of photosystem II (PSII). PSII is a light-driven water:plastoquinone oxidoreductase that uses light energy to abstract electrons from H(2)O, generating O(2) and a proton gradient subsequently used for ATP formation. It consists of a core antenna complex that captures photons, and an electron transfer chain that converts photonic excitation into a charge separation. The polypeptide is Photosystem II reaction center protein K (Glycine max (Soybean)).